Here is a 305-residue protein sequence, read N- to C-terminus: MLKQRTIKSIVKTVGIGVHSGRKIELTLRPAAPGTGIVFSRVDLPTPVDIPASAMSIGDTRLASVLQKDGVRVSTVEHLMSACAGLGIDNLYVDVTAEEIPIMDGSAATFVFLIQSAGIEEQNAPKRFIKVTKPVEIRDGDKFARLDPYFGFKLKFSIDFRHPAVDKTGQELEVDFATTSYVREIARARTFGFAHEAEMLREIGLARGGSMDNAIVLDEYRILNNDGLRYDDEFVKHKMLDAIGDLYVIGHPLLASYTAYKSGHGLNNALLRELLAHEDAYEIVTFDDPQAAPKGFAFDAQTAFA.

His78, His237, and Asp241 together coordinate Zn(2+). The active-site Proton donor is the His264.

It belongs to the LpxC family. Requires Zn(2+) as cofactor.

The enzyme catalyses a UDP-3-O-[(3R)-3-hydroxyacyl]-N-acetyl-alpha-D-glucosamine + H2O = a UDP-3-O-[(3R)-3-hydroxyacyl]-alpha-D-glucosamine + acetate. It participates in glycolipid biosynthesis; lipid IV(A) biosynthesis; lipid IV(A) from (3R)-3-hydroxytetradecanoyl-[acyl-carrier-protein] and UDP-N-acetyl-alpha-D-glucosamine: step 2/6. Its function is as follows. Catalyzes the hydrolysis of UDP-3-O-myristoyl-N-acetylglucosamine to form UDP-3-O-myristoylglucosamine and acetate, the committed step in lipid A biosynthesis. This is UDP-3-O-acyl-N-acetylglucosamine deacetylase from Burkholderia cenocepacia (strain HI2424).